A 199-amino-acid chain; its full sequence is MKIVLATGNAGKLAEMTRMLQGYDAEVVRQGHLGIDSPAETGLTFVENALIKARHCAERSGLPAVADDSGLAVPALGGEPGIYSARYAGSDAGDAANIERLLAELSERGQGDRRGTFHCVMVYLRHAADPAPVIAHGSWTGRIVETPRGHHGFGYDPVFEDPELGQTAAELDAPAKDARSHRGQALRALIQGIAAEVAG.

Residue 7-12 participates in substrate binding; it reads TGNAGK. The Proton acceptor role is filled by Asp-68. Residue Asp-68 participates in Mg(2+) binding. Substrate contacts are provided by residues Ser-69, 153–156, Lys-176, and 181–182; these read FGYD and HR.

Belongs to the HAM1 NTPase family. As to quaternary structure, homodimer. Requires Mg(2+) as cofactor.

It catalyses the reaction XTP + H2O = XMP + diphosphate + H(+). The enzyme catalyses dITP + H2O = dIMP + diphosphate + H(+). The catalysed reaction is ITP + H2O = IMP + diphosphate + H(+). Its function is as follows. Pyrophosphatase that catalyzes the hydrolysis of nucleoside triphosphates to their monophosphate derivatives, with a high preference for the non-canonical purine nucleotides XTP (xanthosine triphosphate), dITP (deoxyinosine triphosphate) and ITP. Seems to function as a house-cleaning enzyme that removes non-canonical purine nucleotides from the nucleotide pool, thus preventing their incorporation into DNA/RNA and avoiding chromosomal lesions. The sequence is that of dITP/XTP pyrophosphatase from Halorhodospira halophila (strain DSM 244 / SL1) (Ectothiorhodospira halophila (strain DSM 244 / SL1)).